Consider the following 363-residue polypeptide: Peroxin-36 (363 aa).

Topologically, residues 1 to 193 (MSNLEKQIRL…ESFFINSFEQ (193 aa)) are cytoplasmic. 2 disordered regions span residues 71 to 114 (QNHQ…DTST) and 128 to 157 (TNSNESQSKGRPSEYTHVNSPDSGVSSKSG). Residues 97–114 (VDSNSDSSSSETLIDTST) show a composition bias toward low complexity. The helical transmembrane segment at 194–213 (LIALFDNFYFLSSLIGFNTS) threads the bilayer. The Peroxisomal segment spans residues 214-232 (NSNSKITRLLRNFIKQASK). A helical membrane pass occupies residues 233–250 (IWLVIIFLTVKNLFIRMI). Residues 251-363 (KLNRTEKKVK…SSDDIIDEYA (113 aa)) lie on the Cytoplasmic side of the membrane.

It is found in the peroxisome membrane. Controls peroxisome morphology and abundance under conditions of peroxisome proliferation such as oleate and methanol media. Has additional function(s), which is not present in its functional homologs such as Saccharomyces cerevisea PEX34 or human PEX16. In Komagataella phaffii (strain GS115 / ATCC 20864) (Yeast), this protein is Peroxin-36.